A 465-amino-acid chain; its full sequence is Cysteine--tRNA ligase (465 aa).

A Zn(2+)-binding site is contributed by cysteine 27. Residues proline 29 to asparagine 39 carry the 'HIGH' region motif. Residues cysteine 207, histidine 232, and glutamate 236 each contribute to the Zn(2+) site. The 'KMSKS' region motif lies at lysine 264–serine 268. Lysine 267 contributes to the ATP binding site.

The protein belongs to the class-I aminoacyl-tRNA synthetase family. Monomer. Requires Zn(2+) as cofactor.

The protein localises to the cytoplasm. It catalyses the reaction tRNA(Cys) + L-cysteine + ATP = L-cysteinyl-tRNA(Cys) + AMP + diphosphate. This Clostridium botulinum (strain ATCC 19397 / Type A) protein is Cysteine--tRNA ligase.